Reading from the N-terminus, the 422-residue chain is 5'-deoxyadenosine deaminase (422 aa).

Residues H57 and H59 each contribute to the Zn(2+) site. Substrate-binding residues include E86 and H178. H205 is a Zn(2+) binding site. Residues E208 and D294 each coordinate substrate. D294 is a binding site for Zn(2+).

The protein belongs to the metallo-dependent hydrolases superfamily. MTA/SAH deaminase family. Homotetramer. It depends on Zn(2+) as a cofactor.

The enzyme catalyses 5'-deoxyadenosine + H2O + H(+) = 5'-deoxyinosine + NH4(+). It catalyses the reaction S-adenosyl-L-homocysteine + H2O + H(+) = S-inosyl-L-homocysteine + NH4(+). The catalysed reaction is S-methyl-5'-thioadenosine + H2O + H(+) = S-methyl-5'-thioinosine + NH4(+). It carries out the reaction adenosine + H2O + H(+) = inosine + NH4(+). It participates in amino-acid biosynthesis; S-adenosyl-L-methionine biosynthesis. Its function is as follows. Catalyzes the deamination of three SAM-derived enzymatic products, namely 5'-deoxyadenosine, S-adenosyl-L-homocysteine, and 5'-methylthioadenosine, to produce the inosine analogs. Can also deaminate adenosine. The preferred substrate for this enzyme is 5'-deoxyadenosine, but all these substrates are efficiently deaminated. Likely functions in a S-adenosyl-L-methionine (SAM) recycling pathway from S-adenosyl-L-homocysteine (SAH) produced from SAM-dependent methylation reactions. May also be involved in the recycling of 5'-deoxyadenosine, whereupon the 5'-deoxyribose moiety of 5'-deoxyinosine is further metabolized to deoxyhexoses used for the biosynthesis of aromatic amino acids in methanogens. The polypeptide is 5'-deoxyadenosine deaminase (Methanococcus maripaludis (strain DSM 14266 / JCM 13030 / NBRC 101832 / S2 / LL)).